Here is a 153-residue protein sequence, read N- to C-terminus: MKIRVVAVGRDRSGLYAPAVDEYAKRLGRYLRFELVEVPEARKLAGTPGAKGEEGAALLAKLGPRERVVVLDERGDELTSVAFAERVRRWMERGQDVALLIGGSDGLAPEVLARAEERLAVSRFTLAHRLARLVLVEQLYRAMTILRGEPYHK.

The S-adenosyl-L-methionine site is built by Leu-71 and Gly-102.

Belongs to the RNA methyltransferase RlmH family. Homodimer.

The protein localises to the cytoplasm. It catalyses the reaction pseudouridine(1915) in 23S rRNA + S-adenosyl-L-methionine = N(3)-methylpseudouridine(1915) in 23S rRNA + S-adenosyl-L-homocysteine + H(+). Specifically methylates the pseudouridine at position 1915 (m3Psi1915) in 23S rRNA. The chain is Ribosomal RNA large subunit methyltransferase H from Anaeromyxobacter dehalogenans (strain 2CP-C).